We begin with the raw amino-acid sequence, 252 residues long: C-X-C motif chemokine 16 (252 aa).

Residues 1–25 (MMLGRTSRLLLVLLFIAYATTSGNG) form the signal peptide. Over 26–198 (NEGSKVGSCP…RGPQAGTSAT (173 aa)) the chain is Extracellular. Disulfide bonds link Cys-34/Cys-64 and Cys-36/Cys-78. Disordered regions lie at residues 115-145 (LPEP…QQPT) and 163-195 (TTTY…QAGT). The segment covering 125–145 (DTATTSQTYLPSTLQRTQQPT) has biased composition (polar residues). The span at 176 to 189 (PEAKENQKQLKENR) shows a compositional bias: basic and acidic residues. The chain crosses the membrane as a helical span at residues 199 to 219 (VPVLSLLAIVFILAGVLLYVV). Residues 220–252 (CKRRKNQLLQHPPDLAASLYTCSRRTRAENGTL) are Cytoplasmic-facing.

The protein belongs to the intercrine alpha (chemokine CxC) family. Post-translationally, glycosylated.

Its subcellular location is the membrane. Its function is as follows. Induces a strong chemotactic response. Induces calcium mobilization. Binds to CXCR6/Bonzo. Also acts as a scavenger receptor on macrophages, which specifically binds to OxLDL (oxidized low density lipoprotein), suggesting that it may be involved in pathophysiology such as atherogenesis. In Bos taurus (Bovine), this protein is C-X-C motif chemokine 16 (CXCL16).